The sequence spans 511 residues: Ulvan-active sulfatase (511 aa).

Residues 1-34 (MNFKQNIVYKKMAISMKITAIRPIALVISFTLLS) form the signal peptide. The N-palmitoyl cysteine moiety is linked to residue cysteine 35. Cysteine 35 carries S-diacylglycerol cysteine lipidation. Residues aspartate 59 and cysteine 99 each contribute to the Ca(2+) site. Residue cysteine 99 is the Nucleophile of the active site. At cysteine 99 the chain carries 3-oxoalanine (Cys). Histidine 149 is a catalytic residue. Ca(2+) is bound at residue aspartate 305.

Belongs to the sulfatase family. Ca(2+) serves as cofactor. The conversion to 3-oxoalanine (also known as C-formylglycine, FGly), of a serine or cysteine residue in prokaryotes and of a cysteine residue in eukaryotes, is critical for catalytic activity. This post-translational modification is severely defective in multiple sulfatase deficiency (MSD).

It localises to the cell membrane. Its function is as follows. Sulfatase involved in ulvan degradation. Ulvan is the main polysaccharide component of the Ulvales (green seaweed) cell wall. It is composed of disaccharide building blocks comprising 3-sulfated rhamnose (Rha3S) linked to D-glucuronic acid (GlcA), L-iduronic acid (IduA), or D-xylose (Xyl). In Formosa agariphila (strain DSM 15362 / KCTC 12365 / LMG 23005 / KMM 3901 / M-2Alg 35-1), this protein is Ulvan-active sulfatase.